A 379-amino-acid polypeptide reads, in one-letter code: tRNA-specific 2-thiouridylase MnmA (379 aa).

Residues 9 to 16 (AMSGGVDS) and methionine 35 each bind ATP. The tract at residues 94–96 (NPD) is interaction with target base in tRNA. Cysteine 99 functions as the Nucleophile in the catalytic mechanism. Cysteine 99 and cysteine 195 are disulfide-bonded. Residue glycine 123 participates in ATP binding. Residues 145–147 (KDQ) form an interaction with tRNA region. Cysteine 195 functions as the Cysteine persulfide intermediate in the catalytic mechanism. The interval 307 to 308 (RY) is interaction with tRNA.

Belongs to the MnmA/TRMU family.

The protein resides in the cytoplasm. The catalysed reaction is S-sulfanyl-L-cysteinyl-[protein] + uridine(34) in tRNA + AH2 + ATP = 2-thiouridine(34) in tRNA + L-cysteinyl-[protein] + A + AMP + diphosphate + H(+). Its function is as follows. Catalyzes the 2-thiolation of uridine at the wobble position (U34) of tRNA, leading to the formation of s(2)U34. This Xylella fastidiosa (strain M12) protein is tRNA-specific 2-thiouridylase MnmA.